Reading from the N-terminus, the 188-residue chain is UPF0301 protein PD_1276 (188 aa).

It belongs to the UPF0301 (AlgH) family.

In Xylella fastidiosa (strain Temecula1 / ATCC 700964), this protein is UPF0301 protein PD_1276.